The sequence spans 420 residues: Threonine aspartase 1 (420 aa).

The interval 1-23 (MTMEKGMSSGEGLPSRSSQVSAG) is disordered. The Nucleophile role is filled by Thr234.

The protein belongs to the Ntn-hydrolase family. As to quaternary structure, intramolecular proteolysis generates 2 subunits, alpha and beta, which reassemble through a non-covalent association to form the fully active enzyme.

Functionally, protease responsible for KMT2A/MLL1 processing and activation. It also activates KMT2D/MLL2. Through substrate activation, it controls the expression of HOXA genes, and the expression of key cell cycle regulators including CCNA1, CCNB1, CCNE1 and CDKN2A. The protein is Threonine aspartase 1 (TASP1) of Homo sapiens (Human).